A 332-amino-acid polypeptide reads, in one-letter code: Probable cation efflux system protein MT2084 (332 aa).

The next 5 helical transmembrane spans lie at 46 to 66, 75 to 95, 113 to 133, 145 to 165, and 202 to 222; these read ISLLVLGLTALIQIVIVVMSG, IHNFADALTAVPLWIAFALGA, AGSFVVAMITMSAIIAGYEAI, VGWVALAGLVGFIGNEWVALY, and VALGFPLADPIVGLLITAAIL.

Belongs to the cation diffusion facilitator (CDF) transporter (TC 2.A.4) family.

Its subcellular location is the cell membrane. In Mycobacterium tuberculosis (strain CDC 1551 / Oshkosh), this protein is Probable cation efflux system protein MT2084.